The following is a 687-amino-acid chain: Immune inhibitor A (687 aa).

Positions 1–12 are enriched in basic and acidic residues; the sequence is MKDAKADTKEKL. A signal peptide (or 32) is located at residues 1-25; it reads MKDAKADTKEKLNQPATGTPAATGP. Residues 1–43 are disordered; it reads MKDAKADTKEKLNQPATGTPAATGPVKGGLNGKVPTSPAKQKA. Positions 26 to 40 are excised as a propeptide; that stretch reads VKGGLNGKVPTSPAK. His-266 is a Zn(2+) binding site. The active site involves Glu-267. Residue His-270 participates in Zn(2+) binding.

Belongs to the peptidase M6 family. Zn(2+) serves as cofactor. The cofactor is Ca(2+).

The protein localises to the secreted. Neutral metalloprotease that is secreted to degrade antibacterial proteins produced by the insect host for its defense (attacins and cecropins). Probably degrades some unknown crucial protein(s) too, since it is toxic when injected to insect larvae. The protein is Immune inhibitor A (ina) of Bacillus thuringiensis subsp. alesti.